The sequence spans 129 residues: ATP synthase epsilon chain (129 aa).

The protein belongs to the ATPase epsilon chain family. As to quaternary structure, F-type ATPases have 2 components, CF(1) - the catalytic core - and CF(0) - the membrane proton channel. CF(1) has five subunits: alpha(3), beta(3), gamma(1), delta(1), epsilon(1). CF(0) has three main subunits: a, b and c.

It is found in the cell inner membrane. In terms of biological role, produces ATP from ADP in the presence of a proton gradient across the membrane. The sequence is that of ATP synthase epsilon chain from Campylobacter jejuni subsp. jejuni serotype O:2 (strain ATCC 700819 / NCTC 11168).